A 208-amino-acid polypeptide reads, in one-letter code: CASP-like protein 3A1 (208 aa).

Polar residues-rich tracts occupy residues 1 to 11 and 17 to 33; these read MGSFANGQNGS and TPATGSNAALEPPTTSA. The interval 1 to 33 is disordered; it reads MGSFANGQNGSELGIQTPATGSNAALEPPTTSA. Topologically, residues 1–43 are cytoplasmic; sequence MGSFANGQNGSELGIQTPATGSNAALEPPTTSAAAPRCPRLGM. A helical membrane pass occupies residues 44–64; it reads AMVAARAAALVMALLSVSLMV. Residues 65-92 lie on the Extracellular side of the membrane; it reads SAKQRGTLAIFGIEIPLYAKWSLSDSLQ. Residues 93 to 113 traverse the membrane as a helical segment; it reads SLVGISAAAAAYSLAQLLSIA. At 114–128 the chain is on the cytoplasmic side; it reads HTALKKAPVVPSRRY. The helical transmembrane segment at 129-149 threads the bilayer; that stretch reads AWMLLAGDQVFAYAMLSAGSA. Residues 150 to 183 are Extracellular-facing; it reads AAAVANLNRTGVRHTALPNFCKPLPRFCDLSAAS. A glycan (N-linked (GlcNAc...) asparagine) is linked at N157. Residues 184–204 traverse the membrane as a helical segment; the sequence is IACAFLGCAFLAASAVIDVIW. Topologically, residues 205-208 are cytoplasmic; it reads LSRL.

Belongs to the Casparian strip membrane proteins (CASP) family. In terms of assembly, homodimer and heterodimers.

It is found in the cell membrane. The sequence is that of CASP-like protein 3A1 from Hordeum vulgare subsp. vulgare (Domesticated barley).